A 267-amino-acid polypeptide reads, in one-letter code: Strigolactone esterase D14 (267 aa).

Catalysis depends on Ser-97, which acts as the Nucleophile. Catalysis depends on residues Asp-218 and His-247.

The protein belongs to the AB hydrolase superfamily. As to quaternary structure, interacts with SMXL6, SMXL7 and SMXL8. The interaction with SMXLs occurs in the presence of (2'R) stereoisomers of strigolactones, but not (2'S) stereoisomers. Interacts with MAX2. Forms a complex with MAX2 and SKP1A/ASK1 in presence of strigolactone. As to expression, expressed at high levels in rosette and cauline leaves and at lower levels in axillary buds, inflorescences, stems, roots and developing vascular tissue of cotyledons.

The protein localises to the cytoplasm. It localises to the nucleus. Functionally, involved in strigolactone signaling pathway. Does not move long distances acropetally in the plant to regulate shoot branching and is rapidly degraded in the presence of strigolactones. Functions downstream of strigolactone synthesis, as a component of hormone signaling and as an enzyme that participates in the conversion of strigolactones to the bioactive form. Acts probably as a strigolactone receptor. Strigolactones are hormones that inhibit tillering and shoot branching through the MAX-dependent pathway, contribute to the regulation of shoot architectural response to phosphate-limiting conditions and function as rhizosphere signal that stimulates hyphal branching of arbuscular mycorrhizal fungi and trigger seed germination of root parasitic weeds. Hydrolyzes methyl carlactonoate (MeCLA), but not carlactone (CL) or carlactonoic acid (CLA). Hydrolyzes the butenolide ring of strigolactones. The initial nucleophilic attack causes an electron shift, followed by the addition of a water molecule, to lead to the release of the ABC ring product and the formation of a 'Ser-97'-stabilized open lactone intermediate. Has no esterase activity for 4-nitrophenyl butyrate. Binds and hydrolyzes the synthetic strigolactone analog GR24 in vitro. Forms a stable covalent complex with the D-ring of strigolactone, which is essential for hormone bioactivity. The D-ring is attached to His-247 of the catalytic triad. The hydrolysis of strigolactone into a covalently linked intermediate molecule initiates a conformational change of D14 to facilitate interaction with MAX2 and formation of the D14-MAX2-SKP1/ASK1 complex to trigger strigolactone signaling. This mechanism defines D14 as a non-canonical hormone receptor with dual functions to generate and sense the active form of strigolactone. The polypeptide is Strigolactone esterase D14 (Arabidopsis thaliana (Mouse-ear cress)).